Here is a 129-residue protein sequence, read N- to C-terminus: Large-conductance mechanosensitive channel (129 aa).

3 helical membrane-spanning segments follow: residues 14 to 34 (IIDLAVAVVIGGAFGKIVTSL), 38 to 58 (IIMPLVGVLTGGIDLTASFVY), and 67 to 87 (LGVFLQSIIDFLIIAFAIFMA).

This sequence belongs to the MscL family. As to quaternary structure, homopentamer.

It localises to the cell membrane. Functionally, channel that opens in response to stretch forces in the membrane lipid bilayer. May participate in the regulation of osmotic pressure changes within the cell. This Lysinibacillus sphaericus (strain C3-41) protein is Large-conductance mechanosensitive channel.